Here is a 567-residue protein sequence, read N- to C-terminus: Allo-aromadendrene synthase TPS4FN (567 aa).

The (2E,6E)-farnesyl diphosphate site is built by Arg-282, Asp-319, Asp-323, Arg-462, and Asp-465. The Mg(2+) site is built by Asp-319 and Asp-323. The DDXXD motif motif lies at 319–323; the sequence is DDIYD. Mg(2+)-binding residues include Asp-465 and Glu-473.

The protein belongs to the terpene synthase family. Tpsb subfamily. The cofactor is Mg(2+). It depends on Mn(2+) as a cofactor.

It catalyses the reaction (2E,6E)-farnesyl diphosphate = alpha-humulene + diphosphate. The enzyme catalyses (2E,6E)-farnesyl diphosphate = (+)-valencene + diphosphate. It carries out the reaction (2E)-geranyl diphosphate = beta-myrcene + diphosphate. The catalysed reaction is (2E,6E)-farnesyl diphosphate = allo-aromadendrene + diphosphate. It catalyses the reaction (2E,6E)-farnesyl diphosphate + H2O = palustrol + diphosphate. It participates in secondary metabolite biosynthesis; terpenoid biosynthesis. In terms of biological role, involved in sesquiterpene olefins biosynthesis, constituants of cannabinoids and terpenoids-rich resins. Catalyzes mainly the conversion of (2E)-farnesyl diphosphate to allo-aromadendrene, and also produces minor products such as alpha-humulene, valencene and palustrol. Can also use (2E)-geranyl diphosphate as substrate with low efficiency, producing minor amounts of myrcene. This chain is Allo-aromadendrene synthase TPS4FN, found in Cannabis sativa (Hemp).